Reading from the N-terminus, the 159-residue chain is Transcription antitermination protein NusB (159 aa).

Belongs to the NusB family.

Its function is as follows. Involved in transcription antitermination. Required for transcription of ribosomal RNA (rRNA) genes. Binds specifically to the boxA antiterminator sequence of the ribosomal RNA (rrn) operons. The sequence is that of Transcription antitermination protein NusB from Stenotrophomonas maltophilia (strain K279a).